Consider the following 114-residue polypeptide: Large ribosomal subunit protein uL22 (114 aa).

It belongs to the universal ribosomal protein uL22 family. In terms of assembly, part of the 50S ribosomal subunit.

This protein binds specifically to 23S rRNA; its binding is stimulated by other ribosomal proteins, e.g. L4, L17, and L20. It is important during the early stages of 50S assembly. It makes multiple contacts with different domains of the 23S rRNA in the assembled 50S subunit and ribosome. In terms of biological role, the globular domain of the protein is located near the polypeptide exit tunnel on the outside of the subunit, while an extended beta-hairpin is found that lines the wall of the exit tunnel in the center of the 70S ribosome. The protein is Large ribosomal subunit protein uL22 of Streptococcus suis (strain 98HAH33).